The chain runs to 198 residues: MLTNNELMEQFYFPDEAPAIPEFLSNDTFQQLEQLMYQQEFSTSDSQSDGANSCSLEMYYDTPSVLELEHMLNAQEQQQHHLQANPLGKNQGRSPRYWNKQQRSKPYDKLSTSMSSSTSSASSSSSSSAGFGGEVLKKRRLAANARERRRMNSLNDAFDKLRDVVPSLGHDRRLSKYETLQMAQAYIGDLVTLLSRDY.

Positions 76 to 131 (EQQQHHLQANPLGKNQGRSPRYWNKQQRSKPYDKLSTSMSSSTSSASSSSSSSAGF) are disordered. Positions 111 to 129 (STSMSSSTSSASSSSSSSA) are enriched in low complexity. Positions 138-190 (KRRLAANARERRRMNSLNDAFDKLRDVVPSLGHDRRLSKYETLQMAQAYIGDL) constitute a bHLH domain.

In terms of assembly, efficient DNA binding requires dimerization with another bHLH protein. Interacts with Daughterless (da). During embryonic development, expression is seen in a small cluster of ectodermal cells during stage 10 which becomes restricted to 1 cell by stage 11. Expression is lost from this cell in the thorax and then the abdomen. Later expression is restricted to sensory organ precursors. Very transient expression was detected in distal leg disks at approximately 0-4 hours after puparium formation (APF), correlating with the anlage of the innervated tarsal claw.

It is found in the nucleus. In terms of biological role, transcription factor involved in early neurogenesis; sensillum basiconica formation and maybe sensillum trichodea development. Promotes multiple dendritic (MD) neuron formation. Required for olfactory sensilla; regulated by lozenge (lz). This Drosophila melanogaster (Fruit fly) protein is Basic helix-loop-helix transcription factor amos (amos).